Here is a 158-residue protein sequence, read N- to C-terminus: Cyclic pyranopterin monophosphate synthase (158 aa).

Residues 74–76 (MCH) and 112–113 (ME) each bind substrate. Asp-127 is a catalytic residue.

It belongs to the MoaC family. In terms of assembly, homohexamer; trimer of dimers.

The catalysed reaction is (8S)-3',8-cyclo-7,8-dihydroguanosine 5'-triphosphate = cyclic pyranopterin phosphate + diphosphate. It participates in cofactor biosynthesis; molybdopterin biosynthesis. Functionally, catalyzes the conversion of (8S)-3',8-cyclo-7,8-dihydroguanosine 5'-triphosphate to cyclic pyranopterin monophosphate (cPMP). This chain is Cyclic pyranopterin monophosphate synthase, found in Helicobacter pylori (strain P12).